Here is a 252-residue protein sequence, read N- to C-terminus: Ribosomal RNA small subunit methyltransferase J (252 aa).

S-adenosyl-L-methionine-binding positions include 101-102, 117-118, 153-154, and Asp-171; these read RD, ER, and SS.

It belongs to the methyltransferase superfamily. RsmJ family.

It is found in the cytoplasm. It carries out the reaction guanosine(1516) in 16S rRNA + S-adenosyl-L-methionine = N(2)-methylguanosine(1516) in 16S rRNA + S-adenosyl-L-homocysteine + H(+). Its function is as follows. Specifically methylates the guanosine in position 1516 of 16S rRNA. The chain is Ribosomal RNA small subunit methyltransferase J from Salmonella typhimurium (strain LT2 / SGSC1412 / ATCC 700720).